Consider the following 310-residue polypeptide: Vomeronasal type-1 receptor 50 (310 aa).

Residues 1–16 (MSKANLLHTDNNMKIT) are Extracellular-facing. The chain crosses the membrane as a helical span at residues 17–37 (LFSEVSVGISANSILFVVHLC). Residues 38-50 (KLLHENKPKPIDL) are Cytoplasmic-facing. Residues 51–71 (YIAFFSITQLMLLITMGLIAV) form a helical membrane-spanning segment. Over 72–93 (DMFMPWGRWDSTTCQSLIYLHR) the chain is Extracellular. Cys-85 and Cys-172 are joined by a disulfide. Residues 94–114 (LLRGLTFCATCLLNVLWTITL) traverse the membrane as a helical segment. Over 115-134 (SPRSSCLTKFKHKSPHHISG) the chain is Cytoplasmic. A helical membrane pass occupies residues 135 to 155 (AFLFFCVLYMSFSSHLLVSII). Residues 156 to 193 (ATFNSTSDNFLYVTQSCSILPVSYSRTSILSTMMTMRE) lie on the Extracellular side of the membrane. The N-linked (GlcNAc...) asparagine glycan is linked to Asn-159. The chain crosses the membrane as a helical span at residues 194-214 (AFLIGLMALSSGYVVVLLWRH). Over 215-237 (KKQARHLHSTSLSSKASPEQRAT) the chain is Cytoplasmic. Residues 238 to 258 (STIMLLMGFFVVLYILDTVIF) traverse the membrane as a helical segment. Over 259–269 (QARLKFKDVST) the chain is Extracellular. The helical transmembrane segment at 270–290 (FFCVKIIISHSYATFSPFVFI) threads the bilayer. The Cytoplasmic segment spans residues 291–310 (CNDKYMIKFVTSMCGRIVNV).

Belongs to the G-protein coupled receptor 1 family. As to expression, expressed in a subset of sensory neurons located in the apical layer of the vomeronasal organ.

It is found in the cell membrane. In terms of biological role, putative pheromone receptor implicated in the regulation of social and reproductive behavior. The protein is Vomeronasal type-1 receptor 50 (Vmn1r50) of Mus musculus (Mouse).